Here is an 819-residue protein sequence, read N- to C-terminus: NEDD4-binding protein 1 (819 aa).

Positions 1-13 are enriched in polar residues; the sequence is MASGSVQSSSGNG. The disordered stretch occupies residues 1–20; that stretch reads MASGSVQSSSGNGRRQAAVV. One can recognise a KH-like domain in the interval 80–164; sequence KQAVRRAKEY…VQQFIALFKD (85 aa). Residues 226–241 show a composition bias toward basic and acidic residues; sequence DDKAECKVNQKDEVSR. 2 disordered regions span residues 226 to 247 and 666 to 736; these read DDKA…AGTP and KLDD…MAPR. One can recognise an RNase NYN domain in the interval 517-669; the sequence is LKHIIIDGSN…LGRYGPKLDD (153 aa). Positions 673–689 are enriched in polar residues; the sequence is KQPNNRTVHSSFPSSNE. The interval 772-819 is coCUN; the sequence is RSPSETMQLKEALLKIFPEADQRHKINEILTAHPFMRDLNALSAMVLD.

It belongs to the N4BP1 family.

It localises to the cytoplasm. The protein resides in the cytosol. Its subcellular location is the nucleus. The protein localises to the nucleolus. It is found in the PML body. Potent suppressor of cytokine production that acts as a regulator of innate immune signaling and inflammation. Acts as a key negative regulator of select cytokine and chemokine responses elicited by TRIF-independent Toll-like receptors (TLRs), thereby limiting inflammatory cytokine responses to minor insults. Has ribonuclease activity. This is NEDD4-binding protein 1 from Xenopus tropicalis (Western clawed frog).